Here is a 513-residue protein sequence, read N- to C-terminus: ATP synthase subunit alpha (513 aa).

Residue 169-176 (GDRQTGKT) participates in ATP binding.

It belongs to the ATPase alpha/beta chains family. F-type ATPases have 2 components, CF(1) - the catalytic core - and CF(0) - the membrane proton channel. CF(1) has five subunits: alpha(3), beta(3), gamma(1), delta(1), epsilon(1). CF(0) has three main subunits: a(1), b(2) and c(9-12). The alpha and beta chains form an alternating ring which encloses part of the gamma chain. CF(1) is attached to CF(0) by a central stalk formed by the gamma and epsilon chains, while a peripheral stalk is formed by the delta and b chains.

The protein localises to the cell inner membrane. It carries out the reaction ATP + H2O + 4 H(+)(in) = ADP + phosphate + 5 H(+)(out). In terms of biological role, produces ATP from ADP in the presence of a proton gradient across the membrane. The alpha chain is a regulatory subunit. In Actinobacillus pleuropneumoniae serotype 3 (strain JL03), this protein is ATP synthase subunit alpha.